The sequence spans 177 residues: Phycocyanin-645 beta chain (177 aa).

Tyr-18 is a mesobiliverdin binding site. (2R,3E)-phycocyanobilin is bound by residues Lys-28, Asn-35, and Asp-39. Residues Cys-50, Asp-54, and Cys-61 each contribute to the 15,16-dihydrobiliverdin site. Arg-77, Cys-82, Arg-84, and Asp-85 together coordinate (2R,3E)-phycocyanobilin. A 15,16-dihydrobiliverdin-binding site is contributed by Gln-148. The (2R,3E)-phycocyanobilin site is built by Pro-154, Gly-156, and Cys-158.

Belongs to the phycobiliprotein family. In terms of assembly, heterotetramer of 2 different alpha chains and 2 identical beta chains which form 2 alpha-beta heterodimers within the heterotetramer. Contains two phycocyanobilin chromophores, one mesobiliverdin chromophore and one 15,16-dihydrobiliverdin chromophore with binding mediated by both the alpha and beta subunits.

It localises to the plastid. The protein localises to the chloroplast thylakoid membrane. In terms of biological role, light-harvesting photosynthetic tetrapyrrole chromophore-protein from the phycobiliprotein complex. The sequence is that of Phycocyanin-645 beta chain from Chroomonas sp.